Here is an 86-residue protein sequence, read N- to C-terminus: Cytochrome c oxidase subunit 12, mitochondrial (86 aa).

The 44-residue stretch at 30 to 73 (TKHCFQSYIDYFRCIKAKGEDFVPCKQFWHAYQSLCPMEWVERW) folds into the CHCH domain. Residues 33 to 43 (CFQSYIDYFRC) carry the Cx9C motif motif. 2 disulfides stabilise this stretch: cysteine 33/cysteine 65 and cysteine 43/cysteine 54. The short motif at 54-65 (CKQFWHAYQSLC) is the Cx10C motif element.

Belongs to the cytochrome c oxidase subunit 6B family. In terms of assembly, component of the cytochrome c oxidase (complex IV, CIV), a multisubunit enzyme composed of a catalytic core of 3 subunits and several supernumerary subunits. The complex exists as a monomer or a dimer and forms supercomplexes (SCs) in the inner mitochondrial membrane with ubiquinol-cytochrome c oxidoreductase (cytochrome b-c1 complex, complex III, CIII).

The protein localises to the mitochondrion inner membrane. The protein operates within energy metabolism; oxidative phosphorylation. Functionally, component of the cytochrome c oxidase, the last enzyme in the mitochondrial electron transport chain which drives oxidative phosphorylation. The respiratory chain contains 3 multisubunit complexes succinate dehydrogenase (complex II, CII), ubiquinol-cytochrome c oxidoreductase (cytochrome b-c1 complex, complex III, CIII) and cytochrome c oxidase (complex IV, CIV), that cooperate to transfer electrons derived from NADH and succinate to molecular oxygen, creating an electrochemical gradient over the inner membrane that drives transmembrane transport and the ATP synthase. Cytochrome c oxidase is the component of the respiratory chain that catalyzes the reduction of oxygen to water. Electrons originating from reduced cytochrome c in the intermembrane space (IMS) are transferred via the dinuclear copper A center (CU(A)) of subunit 2 and heme A of subunit 1 to the active site in subunit 1, a binuclear center (BNC) formed by heme A3 and copper B (CU(B)). The BNC reduces molecular oxygen to 2 water molecules using 4 electrons from cytochrome c in the IMS and 4 protons from the mitochondrial matrix. The polypeptide is Cytochrome c oxidase subunit 12, mitochondrial (cox12) (Schizosaccharomyces pombe (strain 972 / ATCC 24843) (Fission yeast)).